We begin with the raw amino-acid sequence, 155 residues long: IFN signaling evasion protein OPG029 (155 aa).

The protein belongs to the orthopoxvirus OPG029 family. Interacts with host TANK, TBKBP1 and AZI2; these interactions prevent interferon production. Interacts with host STAT2.

Its function is as follows. Prevents establishment of cellular antiviral state by blocking virus-induced phosphorylation and activation of interferon regulatory factors 3/IRF3 and 7/IRF7, transcription factors critical for the induction of interferons alpha and beta. This blockage is produced through the inhibition of host TBK1, by binding host TBK1 adapter proteins TBKBP1 and AZI2, thereby producing a strong inhibition of the phosphorylation and activation of IRF3 and IRF7. Also acts as an inhibitor of the cellular response to type I IFN by interacting with host STAT2. Mechanistically, exerts its inhibitory effect after host ISGF3 complex (composed of STAT1, STAT2 and IRF9) binding to the interferon stimulated response element (ISRE). This chain is IFN signaling evasion protein OPG029 (OPG019), found in Cynomys gunnisoni (Gunnison's prairie dog).